We begin with the raw amino-acid sequence, 485 residues long: Adenosylhomocysteinase (485 aa).

Residues T64, D139, and E205 each contribute to the substrate site. 206–208 (TTT) lines the NAD(+) pocket. Residues K235 and D239 each contribute to the substrate site. Residues N240, 269-274 (GYGDVG), E292, N327, 348-350 (IGH), and N397 contribute to the NAD(+) site.

The protein belongs to the adenosylhomocysteinase family. The cofactor is NAD(+).

It carries out the reaction S-adenosyl-L-homocysteine + H2O = L-homocysteine + adenosine. It participates in amino-acid biosynthesis; L-homocysteine biosynthesis; L-homocysteine from S-adenosyl-L-homocysteine: step 1/1. Functionally, adenosylhomocysteine is a competitive inhibitor of S-adenosyl-L-methionine-dependent methyl transferase reactions; therefore adenosylhomocysteinase may play a key role in the control of methylations via regulation of the intracellular concentration of adenosylhomocysteine. This Lupinus luteus (European yellow lupine) protein is Adenosylhomocysteinase (SAHH).